Consider the following 388-residue polypeptide: Succinate--CoA ligase [ADP-forming] subunit beta (388 aa).

The ATP-grasp domain maps to 9–244 (KEILRKYGVT…LDEEDPAEIE (236 aa)). ATP contacts are provided by residues lysine 46, 53 to 55 (GRG), glutamate 99, alanine 102, and glutamate 107. Asparagine 199 and aspartate 213 together coordinate Mg(2+). Substrate contacts are provided by residues asparagine 264 and 321–323 (GIM).

This sequence belongs to the succinate/malate CoA ligase beta subunit family. Heterotetramer of two alpha and two beta subunits. It depends on Mg(2+) as a cofactor.

It catalyses the reaction succinate + ATP + CoA = succinyl-CoA + ADP + phosphate. The enzyme catalyses GTP + succinate + CoA = succinyl-CoA + GDP + phosphate. It functions in the pathway carbohydrate metabolism; tricarboxylic acid cycle; succinate from succinyl-CoA (ligase route): step 1/1. Functionally, succinyl-CoA synthetase functions in the citric acid cycle (TCA), coupling the hydrolysis of succinyl-CoA to the synthesis of either ATP or GTP and thus represents the only step of substrate-level phosphorylation in the TCA. The beta subunit provides nucleotide specificity of the enzyme and binds the substrate succinate, while the binding sites for coenzyme A and phosphate are found in the alpha subunit. The chain is Succinate--CoA ligase [ADP-forming] subunit beta from Janthinobacterium sp. (strain Marseille) (Minibacterium massiliensis).